A 277-amino-acid chain; its full sequence is S-formylglutathione hydrolase FrmB (277 aa).

Active-site charge relay system residues include Ser145, Asp221, and His254.

Belongs to the esterase D family.

It catalyses the reaction S-formylglutathione + H2O = formate + glutathione + H(+). Serine hydrolase involved in the detoxification of formaldehyde. Hydrolyzes S-formylglutathione to glutathione and formate. The protein is S-formylglutathione hydrolase FrmB (frmB) of Escherichia coli (strain SMS-3-5 / SECEC).